The following is a 219-amino-acid chain: Large ribosomal subunit protein uL4 (219 aa).

The tract at residues 43-101 is disordered; it reads AAARQGTHKTKRRGEVRGGGKKPYRQKGTGRARQGSTRAPQFAGGGVVHGPQPRDYSQR. Basic residues predominate over residues 61–72; sequence GGKKPYRQKGTG.

It belongs to the universal ribosomal protein uL4 family. As to quaternary structure, part of the 50S ribosomal subunit.

Functionally, one of the primary rRNA binding proteins, this protein initially binds near the 5'-end of the 23S rRNA. It is important during the early stages of 50S assembly. It makes multiple contacts with different domains of the 23S rRNA in the assembled 50S subunit and ribosome. Its function is as follows. Forms part of the polypeptide exit tunnel. The protein is Large ribosomal subunit protein uL4 of Streptomyces coelicolor (strain ATCC BAA-471 / A3(2) / M145).